The sequence spans 443 residues: tRNA (guanine-N(7)-)-methyltransferase non-catalytic subunit TRM82 (443 aa).

The segment at 67–93 (ASKKLKTNDGEPVAQPKKQAKVPKPGP) is disordered. WD repeat units follow at residues 97–137 (PVYQ…KDNI), 193–235 (GHVS…IVDK), and 239–279 (GHEE…LLFK).

This sequence belongs to the WD repeat TRM82 family. In terms of assembly, forms a heterodimer with the catalytic subunit TRM8.

Its subcellular location is the nucleus. Its pathway is tRNA modification; N(7)-methylguanine-tRNA biosynthesis. Required for the formation of N(7)-methylguanine at position 46 (m7G46) in tRNA. In the complex, it is required to stabilize and induce conformational changes of the catalytic subunit. This is tRNA (guanine-N(7)-)-methyltransferase non-catalytic subunit TRM82 from Kluyveromyces lactis (strain ATCC 8585 / CBS 2359 / DSM 70799 / NBRC 1267 / NRRL Y-1140 / WM37) (Yeast).